The primary structure comprises 420 residues: Glutamate-1-semialdehyde 2,1-aminomutase (420 aa).

Residue Lys-259 is modified to N6-(pyridoxal phosphate)lysine.

The protein belongs to the class-III pyridoxal-phosphate-dependent aminotransferase family. HemL subfamily. It depends on pyridoxal 5'-phosphate as a cofactor.

Its subcellular location is the cytoplasm. The enzyme catalyses (S)-4-amino-5-oxopentanoate = 5-aminolevulinate. It participates in porphyrin-containing compound metabolism; protoporphyrin-IX biosynthesis; 5-aminolevulinate from L-glutamyl-tRNA(Glu): step 2/2. The polypeptide is Glutamate-1-semialdehyde 2,1-aminomutase (Sulfolobus acidocaldarius (strain ATCC 33909 / DSM 639 / JCM 8929 / NBRC 15157 / NCIMB 11770)).